The following is a 386-amino-acid chain: Methylthioribose-1-phosphate isomerase (386 aa).

The active-site Proton donor is the Asp261.

This sequence belongs to the eIF-2B alpha/beta/delta subunits family. MtnA subfamily.

The protein localises to the cytoplasm. It is found in the nucleus. It carries out the reaction 5-(methylsulfanyl)-alpha-D-ribose 1-phosphate = 5-(methylsulfanyl)-D-ribulose 1-phosphate. It participates in amino-acid biosynthesis; L-methionine biosynthesis via salvage pathway; L-methionine from S-methyl-5-thio-alpha-D-ribose 1-phosphate: step 1/6. Functionally, catalyzes the interconversion of methylthioribose-1-phosphate (MTR-1-P) into methylthioribulose-1-phosphate (MTRu-1-P). This is Methylthioribose-1-phosphate isomerase from Paracoccidioides brasiliensis (strain Pb03).